We begin with the raw amino-acid sequence, 412 residues long: Multifunctional CCA protein (412 aa).

Glycine 8 and arginine 11 together coordinate ATP. The CTP site is built by glycine 8 and arginine 11. Residues aspartate 21 and aspartate 23 each coordinate Mg(2+). Residues arginine 91, arginine 137, and arginine 140 each contribute to the ATP site. Residues arginine 91, arginine 137, and arginine 140 each contribute to the CTP site. In terms of domain architecture, HD spans 228 to 329 (TGIHTLMTLS…VKLFDSIDAW (102 aa)).

This sequence belongs to the tRNA nucleotidyltransferase/poly(A) polymerase family. Bacterial CCA-adding enzyme type 1 subfamily. As to quaternary structure, monomer. Can also form homodimers and oligomers. It depends on Mg(2+) as a cofactor. Ni(2+) serves as cofactor.

It catalyses the reaction a tRNA precursor + 2 CTP + ATP = a tRNA with a 3' CCA end + 3 diphosphate. It carries out the reaction a tRNA with a 3' CCA end + 2 CTP + ATP = a tRNA with a 3' CCACCA end + 3 diphosphate. In terms of biological role, catalyzes the addition and repair of the essential 3'-terminal CCA sequence in tRNAs without using a nucleic acid template. Adds these three nucleotides in the order of C, C, and A to the tRNA nucleotide-73, using CTP and ATP as substrates and producing inorganic pyrophosphate. tRNA 3'-terminal CCA addition is required both for tRNA processing and repair. Also involved in tRNA surveillance by mediating tandem CCA addition to generate a CCACCA at the 3' terminus of unstable tRNAs. While stable tRNAs receive only 3'-terminal CCA, unstable tRNAs are marked with CCACCA and rapidly degraded. The sequence is that of Multifunctional CCA protein from Shigella flexneri.